Consider the following 357-residue polypeptide: Phosphoribosylformylglycinamidine cyclo-ligase (357 aa).

The protein belongs to the AIR synthase family.

It localises to the cytoplasm. It catalyses the reaction 2-formamido-N(1)-(5-O-phospho-beta-D-ribosyl)acetamidine + ATP = 5-amino-1-(5-phospho-beta-D-ribosyl)imidazole + ADP + phosphate + H(+). The protein operates within purine metabolism; IMP biosynthesis via de novo pathway; 5-amino-1-(5-phospho-D-ribosyl)imidazole from N(2)-formyl-N(1)-(5-phospho-D-ribosyl)glycinamide: step 2/2. In Agrobacterium fabrum (strain C58 / ATCC 33970) (Agrobacterium tumefaciens (strain C58)), this protein is Phosphoribosylformylglycinamidine cyclo-ligase.